The following is a 395-amino-acid chain: Lipid-A-disaccharide synthase (395 aa).

This sequence belongs to the LpxB family.

The enzyme catalyses a lipid X + a UDP-2-N,3-O-bis[(3R)-3-hydroxyacyl]-alpha-D-glucosamine = a lipid A disaccharide + UDP + H(+). The protein operates within bacterial outer membrane biogenesis; LPS lipid A biosynthesis. Condensation of UDP-2,3-diacylglucosamine and 2,3-diacylglucosamine-1-phosphate to form lipid A disaccharide, a precursor of lipid A, a phosphorylated glycolipid that anchors the lipopolysaccharide to the outer membrane of the cell. The chain is Lipid-A-disaccharide synthase from Bordetella avium (strain 197N).